The sequence spans 292 residues: Chondroitin proteoglycan 3 (292 aa).

The N-terminal stretch at 1 to 17 (MRFVFIIALLLIGASLA) is a signal peptide. The tract at residues 28–103 (DVSASEDEFS…EGSGDTSPVV (76 aa)) is disordered. A compositionally biased stretch (low complexity) spans 38-80 (GDSSGEISGESSGEASGEASGEASGEASGEASGESSGETSGES). The segment covering 81 to 96 (SGDEETSGEGSGEEGS) has biased composition (acidic residues). Asn174 and Asn254 each carry an N-linked (GlcNAc...) asparagine glycan.

This chain is Chondroitin proteoglycan 3, found in Caenorhabditis elegans.